The chain runs to 256 residues: NAD-dependent protein deacetylase (256 aa).

The Deacetylase sirtuin-type domain maps to 1-254; that stretch reads MDISYHEKIS…KDILDVIKSE (254 aa). NAD(+) contacts are provided by Ala28, Thr32, Phe39, Arg40, Gln105, Ile107, Asp108, and His123. Residue Phe39 participates in nicotinamide binding. The nicotinamide site is built by Ile107 and Asp108. His123 serves as the catalytic Proton acceptor. Zn(2+) is bound by residues Cys131, Cys134, Cys156, and Cys159. NAD(+)-binding residues include Thr197, Ser198, and Asn222.

This sequence belongs to the sirtuin family. Class U subfamily. Requires Zn(2+) as cofactor.

The protein resides in the cytoplasm. It carries out the reaction N(6)-acetyl-L-lysyl-[protein] + NAD(+) + H2O = 2''-O-acetyl-ADP-D-ribose + nicotinamide + L-lysyl-[protein]. Its function is as follows. NAD-dependent protein deacetylase which modulates the activities of several enzymes which are inactive in their acetylated form. The sequence is that of NAD-dependent protein deacetylase from Thermodesulfovibrio yellowstonii (strain ATCC 51303 / DSM 11347 / YP87).